The sequence spans 548 residues: T-complex protein 1 subunit theta (548 aa).

Ala2 carries the post-translational modification N-acetylalanine. ADP is bound by residues Tyr47 and Gly48. Asp99 contacts Mg(2+). 9 residues coordinate ADP: Gly100, Thr101, Asn102, Phe103, Met169, Ser170, Lys171, Gly412, and Asp499. Residues Gly100, Thr101, and Asn102 each coordinate ATP. ATP contacts are provided by Ser170, Lys171, Gly412, Asp499, and Lys504. Tyr505 bears the Phosphotyrosine mark. The interval 529–548 is disordered; it reads PAGGPKPPSGKKDWDEDQND.

As to quaternary structure, component of the chaperonin-containing T-complex (TRiC), a hexadecamer composed of two identical back-to-back stacked rings enclosing a protein folding chamber. Each ring is made up of eight different subunits: TCP1/CCT1, CCT2, CCT3, CCT4, CCT5, CCT6A/CCT6, CCT7, CCT8.

The protein localises to the cytoplasm. It localises to the cytoskeleton. The protein resides in the microtubule organizing center. Its subcellular location is the centrosome. It is found in the cilium basal body. The enzyme catalyses ATP + H2O = ADP + phosphate + H(+). Functionally, component of the chaperonin-containing T-complex (TRiC), a molecular chaperone complex that assists the folding of actin, tubulin and other proteins upon ATP hydrolysis. In Gallus gallus (Chicken), this protein is T-complex protein 1 subunit theta.